The chain runs to 259 residues: Ras-related protein Rab-34 (259 aa).

N-acetylmethionine is present on Met1. Residues Ser62, Val63, Gly64, Lys65, Thr66, Asp78, Tyr81, and Thr84 each contribute to the GTP site. Thr66 contributes to the Mg(2+) binding site. The Switch 1 motif lies at 71–89 (RFCKDTFDKNYKATIGVDF). Mg(2+) is bound by residues Thr84 and Asp107. The short motif at 108–127 (TAGQERFKCIASTYYRGAQA) is the Switch 2 element. Residues Gly110, Lys167, Asp169, and Ser198 each contribute to the GTP site. Ser241 is modified (phosphoserine). 2 S-geranylgeranyl cysteine lipidation sites follow: Cys257 and Cys258.

This sequence belongs to the small GTPase superfamily. Rab family. As to quaternary structure, interacts with RILP. The GTP-bound form interacts with REP15. Requires Mg(2+) as cofactor.

The protein resides in the cytoplasm. Its subcellular location is the golgi apparatus. It is found in the cytoplasmic vesicle. It localises to the phagosome. The protein localises to the phagosome membrane. The protein resides in the cell projection. Its subcellular location is the cilium. It is found in the cytoskeleton. It localises to the microtubule organizing center. The protein localises to the centrosome. The protein resides in the centriole. The catalysed reaction is GTP + H2O = GDP + phosphate + H(+). Its activity is regulated as follows. Regulated by guanine nucleotide exchange factors (GEFs) which promote the exchange of bound GDP for free GTP. Regulated by GTPase activating proteins (GAPs) which increase the GTP hydrolysis activity. Inhibited by GDP dissociation inhibitors (GDIs). Functionally, the small GTPases Rab are key regulators of intracellular membrane trafficking, from the formation of transport vesicles to their fusion with membranes. Rabs cycle between an inactive GDP-bound form and an active GTP-bound form that is able to recruit to membranes different sets of downstream effectors directly responsible for vesicle formation, movement, tethering and fusion. RAB34 transports protein involved in the redistribution of lysosomes to the peri-Golgi region. Plays a role in the maturation of phagosomes that engulf pathogens, such as S.aureus and M.tuberculosis. Plays a role in the fusion of phagosomes with lysosomes. Involved in ciliogenesis. In particular, it is required for early steps of the intracellular cilium assembly pathway initiated by trafficking and docking of ciliary vesicles to the centrioles in the cytoplasm, followed by axoneme formation in the cytoplasm. After axoneme elongation, the centrioles migrate close to the cell surface so that ciliary vesicles can fuse with the plasma membrane to expose cilia to the extracellular space. It seems dispensable for ciliogenesis via the extracellular pathway where cilium assembly begins after migration and docking of the centriole to the plasma membrane. Also acts as a positive regulator of hedgehog signaling and regulates ciliary function. This Rattus norvegicus (Rat) protein is Ras-related protein Rab-34.